Consider the following 392-residue polypeptide: Phosphoglycerate kinase (392 aa).

Substrate is bound by residues 21–23, arginine 36, 59–62, arginine 113, and arginine 146; these read DLN and HLGR. ATP contacts are provided by residues lysine 197, glutamate 319, and 345-348; that span reads GGDT.

This sequence belongs to the phosphoglycerate kinase family. In terms of assembly, monomer.

It localises to the cytoplasm. It carries out the reaction (2R)-3-phosphoglycerate + ATP = (2R)-3-phospho-glyceroyl phosphate + ADP. The protein operates within carbohydrate degradation; glycolysis; pyruvate from D-glyceraldehyde 3-phosphate: step 2/5. In Alkalilimnicola ehrlichii (strain ATCC BAA-1101 / DSM 17681 / MLHE-1), this protein is Phosphoglycerate kinase.